The chain runs to 588 residues: uncharacterized protein (588 aa).

A signal peptide spans 1–19 (MRSTAYLTALLSFLGATHA). Asn45 and Asn104 each carry an N-linked (GlcNAc...) asparagine glycan. The 186-residue stretch at 118 to 303 (GQGRIPLYSA…TSVTLRTFKD (186 aa)) folds into the FAD-binding PCMH-type domain. His156 is subject to Pros-8alpha-FAD histidine. Residues Asn179, Asn312, Asn320, Asn351, Asn370, and Asn446 are each glycosylated (N-linked (GlcNAc...) asparagine).

This sequence belongs to the oxygen-dependent FAD-linked oxidoreductase family. FAD serves as cofactor.

It localises to the secreted. This is an uncharacterized protein from Arthroderma benhamiae (strain ATCC MYA-4681 / CBS 112371) (Trichophyton mentagrophytes).